Reading from the N-terminus, the 488-residue chain is 3-octaprenyl-4-hydroxybenzoate carboxy-lyase (488 aa).

Asn-172 is a Mn(2+) binding site. Residues 175 to 177, 189 to 191, and 194 to 195 each bind prenylated FMN; these read IYR, RWL, and RG. Glu-238 lines the Mn(2+) pocket. The Proton donor role is filled by Asp-287.

It belongs to the UbiD family. As to quaternary structure, homohexamer. Requires prenylated FMN as cofactor. The cofactor is Mn(2+).

It localises to the cell membrane. It catalyses the reaction a 4-hydroxy-3-(all-trans-polyprenyl)benzoate + H(+) = a 2-(all-trans-polyprenyl)phenol + CO2. It functions in the pathway cofactor biosynthesis; ubiquinone biosynthesis. In terms of biological role, catalyzes the decarboxylation of 3-octaprenyl-4-hydroxy benzoate to 2-octaprenylphenol, an intermediate step in ubiquinone biosynthesis. The polypeptide is 3-octaprenyl-4-hydroxybenzoate carboxy-lyase (Legionella pneumophila (strain Lens)).